Consider the following 139-residue polypeptide: Transthyretin-like protein 5 (139 aa).

An N-terminal signal peptide occupies residues 1–15 (MKLIILLCLVASSYA).

The protein belongs to the nematode transthyretin-like family.

The protein resides in the secreted. The sequence is that of Transthyretin-like protein 5 (ttr-5) from Caenorhabditis elegans.